The chain runs to 1538 residues: CLIP-associating protein 1 (1538 aa).

2 HEAT repeats span residues Ala-87–Asn-124 and Leu-163–Glu-200. The interval Ser-235–Glu-292 is disordered. Ser-246 bears the Phosphoserine mark. Residues Arg-251–Arg-268 show a composition bias toward low complexity. HEAT repeat units lie at residues His-405–Thr-440 and His-441–Thr-477. The disordered stretch occupies residues Ser-543–Arg-783. Residues Ser-545, Ser-548, Ser-558, Ser-559, and Ser-568 each carry the phosphoserine modification. Over residues Ser-548–Leu-567 the composition is skewed to low complexity. The segment covering Thr-574–Ser-594 has biased composition (low complexity). Phosphoserine is present on Ser-600. Low complexity predominate over residues Ala-606–Ala-628. Phosphoserine occurs at positions 636, 646, 647, and 649. The span at Gln-645–Asp-658 shows a compositional bias: polar residues. Position 656 is a phosphothreonine (Thr-656). The interaction with microtubules, MAPRE1 and MAPRE3 stretch occupies residues Arg-662–Pro-785. A compositionally biased stretch (low complexity) spans Arg-673 to Leu-692. Residues Ser-684, Ser-688, Ser-695, and Ser-705 each carry the phosphoserine modification. The span at Leu-693–Ser-705 shows a compositional bias: gly residues. Position 711 is a phosphothreonine (Thr-711). Ser-714 is subject to Phosphoserine. Residues Gln-724–Asn-733 are compositionally biased toward polar residues. Residues Ser-787, Ser-797, and Ser-823 each carry the phosphoserine modification. An HEAT 5 repeat occupies Gln-974 to Pro-1011. Disordered stretches follow at residues His-1080–Gly-1120 and Ala-1136–Ala-1156. The segment covering Lys-1082 to Gly-1097 has biased composition (polar residues). Ser-1091 is subject to Phosphoserine. Thr-1095 and Thr-1099 each carry phosphothreonine. Low complexity predominate over residues Ser-1106–Thr-1115. Ser-1113 bears the Phosphoserine mark. Phosphoserine is present on residues Ser-1196 and Ser-1223. The tract at residues Val-1215 to Arg-1238 is disordered. An interaction with CLIP2 region spans residues Arg-1254 to Ser-1538. Residues Arg-1254–Ser-1538 form an interaction with PHLDB2 and RSN region. Positions Phe-1256 to Ser-1538 are localization to kinetochores. Residues Asp-1299–Lys-1330 are a coiled coil. HEAT repeat units lie at residues Glu-1342–Ala-1379 and Gln-1460–Glu-1497.

This sequence belongs to the CLASP family. As to quaternary structure, interacts with CLIP2, ERC1, MAPRE1, MAPRE3, microtubules, PHLDB2 and RSN. The interaction with ERC1 may be mediated by PHLDB2. Interacts with GCC2; recruits CLASP1 to Golgi membranes. Interacts with MACF1. Interacts with mtcl2 and MTCL1.

It localises to the cytoplasm. It is found in the cytoskeleton. The protein localises to the microtubule organizing center. Its subcellular location is the centrosome. The protein resides in the chromosome. It localises to the centromere. It is found in the kinetochore. The protein localises to the spindle. Its subcellular location is the golgi apparatus. The protein resides in the trans-Golgi network. In terms of biological role, microtubule plus-end tracking protein that promotes the stabilization of dynamic microtubules. Involved in the nucleation of noncentrosomal microtubules originating from the trans-Golgi network (TGN). Required for the polarization of the cytoplasmic microtubule arrays in migrating cells towards the leading edge of the cell. May act at the cell cortex to enhance the frequency of rescue of depolymerizing microtubules by attaching their plus-ends to cortical platforms composed of ERC1 and PHLDB2. This cortical microtubule stabilizing activity is regulated at least in part by phosphatidylinositol 3-kinase signaling. Also performs a similar stabilizing function at the kinetochore which is essential for the bipolar alignment of chromosomes on the mitotic spindle. The protein is CLIP-associating protein 1 (CLASP1) of Homo sapiens (Human).